A 272-amino-acid chain; its full sequence is Aquaporin-11 (272 aa).

Residues 1-14 lie on the Cytoplasmic side of the membrane; the sequence is MTALRALWSEMQDT. A helical membrane pass occupies residues 15-35; it reads CTSLGLMLSVVLLAGLARVVA. At 36 to 47 the chain is on the lumenal side; the sequence is RQQQLHRPMAHA. A helical membrane pass occupies residues 48–68; sequence FVLEFLATLQLCCCTHELLLL. The Cytoplasmic segment spans residues 69 to 75; it reads SEQEPAH. Residues 76–96 traverse the membrane as a helical segment; sequence PTWPLTLIYFFTLVHGLTLVG. Residues 97 to 167 are Lumenal-facing; the sequence is TSSNPCGVMM…NPIQVDLPKA (71 aa). An NPC motif is present at residues 100–102; the sequence is NPC. The chain crosses the membrane as a helical span at residues 168 to 188; that stretch reads VIVEALCSFIFHSALLNFQEV. At 189 to 195 the chain is on the cytoplasmic side; sequence RPKLRIH. Residues 196–216 traverse the membrane as a helical segment; the sequence is LLAALITFLVYAGGSLTGAVF. The NPA motif lies at 217–219; that stretch reads NPA. At 217–235 the chain is on the lumenal side; that stretch reads NPALALSLHFKCFDEAFLQ. A helical transmembrane segment spans residues 236–256; that stretch reads FFIVYWLAPSLGILLMILMFS. At 257 to 272 the chain is on the cytoplasmic side; sequence FFLPWLYNNHTINKKE.

This sequence belongs to the MIP/aquaporin (TC 1.A.8) family. AQP11/AQP12 subfamily. In terms of assembly, homodimer; disulfide-linked. Homotetramer. Can also form homomultimer. Not glycosylated. Expressed in retina specifically at retinal Mueller glial cells.

It is found in the endoplasmic reticulum membrane. Its subcellular location is the cytoplasmic vesicle membrane. It localises to the cell membrane. It carries out the reaction H2O(in) = H2O(out). The catalysed reaction is glycerol(in) = glycerol(out). It catalyses the reaction H2O2(out) = H2O2(in). Functionally, channel protein that facilitates the transport of water, glycerol and hydrogen peroxide across membrane of cell or organelles guaranteeing intracellular homeostasis in several organes like liver, kidney and brain. In situation of stress, participates in endoplasmic reticulum (ER) homeostasis by regulating redox homeostasis through the transport of hydrogen peroxide across the endoplasmic reticulum membrane thereby regulating the oxidative stress through the NADPH oxidase 2 pathway. Plays a role by maintaining an environment suitable for translation or protein foldings in the ER lumen namely by participating in the PKD1 glycosylation processing resulting in regulation of PKD1 membrane trafficking thereby preventing the accumulation of unfolding protein in ER. Plays a role in the proximal tubule function by regulating its endosomal acidification. May play a role in postnatal kidney development. The polypeptide is Aquaporin-11 (Equus caballus (Horse)).